Reading from the N-terminus, the 192-residue chain is Natural cytotoxicity triggering receptor 3 (192 aa).

The N-terminal stretch at 1 to 18 is a signal peptide; the sequence is MAKVLLIVFIMVYAGSCA. The 108-residue stretch at 19–126 folds into the Ig-like domain; sequence IWVSQPPEIR…VGTGNGTRLV (108 aa). Residues 19 to 147 lie on the Extracellular side of the membrane; sequence IWVSQPPEIR…AEPERAAYTS (129 aa). An intrachain disulfide couples Cys-39 to Cys-108. 2 N-linked (GlcNAc...) asparagine glycosylation sites follow: Asn-42 and Asn-121. A helical membrane pass occupies residues 148–168; it reads LLLRAGVYALSFLSVATGSVI. Over 169-192 the chain is Cytoplasmic; it reads YYQGKCLCHVGNTATPPTASEERF.

It belongs to the natural cytotoxicity receptor (NCR) family. As to quaternary structure, homodimer in the unliganted form. Interacts with CD3Z. Interacts with and is activated by binding to NCR3LG1. Interacts with and is activated by binding to BAG6. Interacts with and is inhibited by binding to LGALS3.

It localises to the cell membrane. Functionally, cell membrane receptor of natural killer/NK cells that is activated by binding of extracellular ligands including BAG6 and NCR3LG1. Stimulates NK cells cytotoxicity toward neighboring cells producing these ligands. It controls, for instance, NK cells cytotoxicity against tumor cells. Engagement of NCR3 by BAG6 also promotes myeloid dendritic cells (DC) maturation, both through killing DCs that did not acquire a mature phenotype, and inducing the release by NK cells of TNFA and IFNG that promote DC maturation. In Rattus norvegicus (Rat), this protein is Natural cytotoxicity triggering receptor 3 (Ncr3).